Consider the following 277-residue polypeptide: Large ribosomal subunit protein uL2c (277 aa).

Residues 228–254 are disordered; that stretch reads VDHPHGGGEGRCPVGHAQPRTPWGKPA.

It belongs to the universal ribosomal protein uL2 family. As to quaternary structure, part of the 50S ribosomal subunit.

Its subcellular location is the plastid. The protein resides in the chloroplast. This is Large ribosomal subunit protein uL2c (rpl2) from Ostreococcus tauri.